Consider the following 370-residue polypeptide: Neutral protease 2 homolog AFUA_4G13750 (370 aa).

Positions 1–19 are cleaved as a signal peptide; it reads MKVTILASAILALINGALA. Residues 20–172 constitute a propeptide that is removed on maturation; the sequence is LPANTPTLDV…PQAIKLLDRR (153 aa). 2 disulfide bridges follow: Cys-178/Cys-250 and Cys-257/Cys-275. A Zn(2+)-binding site is contributed by His-300. Glu-301 is an active-site residue. Residues His-304 and Asp-315 each contribute to the Zn(2+) site.

Belongs to the peptidase M35 family. The cofactor is Zn(2+).

It localises to the secreted. The catalysed reaction is Preferential cleavage of bonds with hydrophobic residues in P1'. Also 3-Asn-|-Gln-4 and 8-Gly-|-Ser-9 bonds in insulin B chain.. Its function is as follows. Secreted metalloproteinase that allows assimilation of proteinaceous substrates. Shows high activities on basic nuclear substrates such as histone and protamine. May be involved in virulence. In Aspergillus fumigatus (strain ATCC MYA-4609 / CBS 101355 / FGSC A1100 / Af293) (Neosartorya fumigata), this protein is Neutral protease 2 homolog AFUA_4G13750.